The following is a 210-amino-acid chain: Ras-related protein RABC2a (210 aa).

Residue 20–27 (GDSGVGKS) coordinates GTP. An Effector region motif is present at residues 41–49 (LAPTIGVDF). Residues 67 to 71 (DTAGQ), 127 to 130 (NKVD), and 157 to 158 (SA) each bind GTP. S-geranylgeranyl cysteine attachment occurs at residues C208 and C209.

It belongs to the small GTPase superfamily. Rab family. In terms of assembly, interacts with XI-2/MYA2.

The protein resides in the cell membrane. It is found in the cytoplasm. Functionally, intracellular vesicle trafficking and protein transport. This is Ras-related protein RABC2a (RABC2A) from Arabidopsis thaliana (Mouse-ear cress).